A 302-amino-acid chain; its full sequence is MHLDEGFDDDLDEERVPNLGIVAESISQLGIDVLLSGETGTGKDTIAQRIHTISGRKGRLVAMNCAAIPESLAESELFGVVSPAYTGADRSRVGYIEAAQGGTLYLDEIDSMPLSLQAKLLRVLETRALERLGSTSTIKLDVCVIASAQSSLDDAVEQGKFRRDLYFRLNVLTLQLPPLRTQPERILPLFKRFMAAAAKELNVASADVCPLLQQVLLGHEWPGNIRELKAAAKRHVLGFPVLGVDPQSEEHLACGLKSQLRAIEKALIQQSLKRHRNCIDAASLELDMPRRTLYRRIKELQI.

Residues 9-237 (DDLDEERVPN…LKAAAKRHVL (229 aa)) form the Sigma-54 factor interaction domain. ATP contacts are provided by residues 37 to 44 (GETGTGKD) and 99 to 108 (AQGGTLYLDE). The segment at residues 279–298 (IDAASLELDMPRRTLYRRIK) is a DNA-binding region (H-T-H motif).

In terms of biological role, member of the two-component regulatory system HrpR/HrpS that regulates the activation of the sigma factor hrpL which itself induces the expression of hprD as well as other hrp loci which are involved in plant pathogenicity, hrmA and avr genes. Probably interacts with sigma-54. The sequence is that of Pathogenicity locus probable regulatory protein HrpS (hrpS) from Pseudomonas savastanoi pv. phaseolicola (Pseudomonas syringae pv. phaseolicola).